A 162-amino-acid chain; its full sequence is Nucleotide-binding protein Anae109_0095 (162 aa).

This sequence belongs to the YajQ family.

Functionally, nucleotide-binding protein. This chain is Nucleotide-binding protein Anae109_0095, found in Anaeromyxobacter sp. (strain Fw109-5).